The chain runs to 599 residues: Aspartate--tRNA ligase (599 aa).

Glu180 serves as a coordination point for L-aspartate. An aspartate region spans residues 204 to 207 (QIFK). L-aspartate is bound at residue Arg226. ATP-binding positions include 226-228 (RDE) and Gln235. His454 serves as a coordination point for L-aspartate. Position 488 (Glu488) interacts with ATP. An L-aspartate-binding site is contributed by Arg495. An ATP-binding site is contributed by 540-543 (GLDR).

It belongs to the class-II aminoacyl-tRNA synthetase family. Type 1 subfamily. In terms of assembly, homodimer.

The protein resides in the cytoplasm. The enzyme catalyses tRNA(Asp) + L-aspartate + ATP = L-aspartyl-tRNA(Asp) + AMP + diphosphate. Its function is as follows. Catalyzes the attachment of L-aspartate to tRNA(Asp) in a two-step reaction: L-aspartate is first activated by ATP to form Asp-AMP and then transferred to the acceptor end of tRNA(Asp). This is Aspartate--tRNA ligase from Clostridium botulinum (strain Eklund 17B / Type B).